Reading from the N-terminus, the 324-residue chain is tRNA dimethylallyltransferase (324 aa).

Residue 20-27 (GPTASGKS) coordinates ATP. 22–27 (TASGKS) contacts substrate. Interaction with substrate tRNA regions lie at residues 45 to 48 (DSAL), 168 to 172 (QRLIR), and 284 to 291 (KRQITWLR).

This sequence belongs to the IPP transferase family. In terms of assembly, monomer. It depends on Mg(2+) as a cofactor.

The catalysed reaction is adenosine(37) in tRNA + dimethylallyl diphosphate = N(6)-dimethylallyladenosine(37) in tRNA + diphosphate. Functionally, catalyzes the transfer of a dimethylallyl group onto the adenine at position 37 in tRNAs that read codons beginning with uridine, leading to the formation of N6-(dimethylallyl)adenosine (i(6)A). The chain is tRNA dimethylallyltransferase from Hydrogenovibrio crunogenus (strain DSM 25203 / XCL-2) (Thiomicrospira crunogena).